The following is a 397-amino-acid chain: Methylthioribose kinase (397 aa).

Residues Asn44, Lys61, and 115–117 each bind ATP; that span reads EDL. Asp233 contacts substrate. An ATP-binding site is contributed by 250–252; the sequence is DPE. Arg340 contacts substrate.

It belongs to the methylthioribose kinase family. In terms of assembly, homodimer.

It carries out the reaction 5-(methylsulfanyl)-D-ribose + ATP = 5-(methylsulfanyl)-alpha-D-ribose 1-phosphate + ADP + H(+). It participates in amino-acid biosynthesis; L-methionine biosynthesis via salvage pathway; S-methyl-5-thio-alpha-D-ribose 1-phosphate from S-methyl-5'-thioadenosine (hydrolase route): step 2/2. Functionally, catalyzes the phosphorylation of methylthioribose into methylthioribose-1-phosphate. The protein is Methylthioribose kinase (mtnK) of Bacillus subtilis (strain 168).